We begin with the raw amino-acid sequence, 213 residues long: Uridine kinase (213 aa).

Residue 15 to 22 participates in ATP binding; the sequence is GGSGSGKT.

The protein belongs to the uridine kinase family.

The protein localises to the cytoplasm. The catalysed reaction is uridine + ATP = UMP + ADP + H(+). It carries out the reaction cytidine + ATP = CMP + ADP + H(+). It functions in the pathway pyrimidine metabolism; CTP biosynthesis via salvage pathway; CTP from cytidine: step 1/3. Its pathway is pyrimidine metabolism; UMP biosynthesis via salvage pathway; UMP from uridine: step 1/1. This Ligilactobacillus salivarius (strain UCC118) (Lactobacillus salivarius) protein is Uridine kinase.